The sequence spans 430 residues: MKRMKLRTNAGPLQGTIQVPGDKSISHRAVILGAVAKGETRVKGLLKGEDVLSTIQAFRNLGVRIEEKDDQLVIEGQGFQGLTAPCQTLNMGNSGTSMRLIAGLLAGQPFSVKMIGDESLSKRPMDRIVYPLKQMGVEISGETDRQFPPLQLQGNRNLQPITYTLPISSAQVKSAILLAALQAKGTTQVVEKEITRNHTEEMIQQFGGRLIVDGKRITLVGPQQLTAQEITVPGDISSAAFWLVAGLIIPGSELLLKNVGVNPTRTGILEVVEKMGAQIVYEDMNKKEQVTSIRVVYSHLKGTIISGGLIPRLIDELPIIALLATQAQGTTCIKDAQELRVKETDRIQVVTDTLNSMGANIKATADGMIIKGPTVLYGANTSTYGDHRIGMMTAIAALLVKQGQVHLDKEEAIMTSYPTFFKDLERLCHD.

Positions 23, 24, and 28 each coordinate 3-phosphoshikimate. Residue Lys-23 participates in phosphoenolpyruvate binding. 2 residues coordinate phosphoenolpyruvate: Gly-95 and Arg-123. 4 residues coordinate 3-phosphoshikimate: Ser-169, Gln-171, Asp-315, and Lys-342. A phosphoenolpyruvate-binding site is contributed by Gln-171. Asp-315 (proton acceptor) is an active-site residue. 2 residues coordinate phosphoenolpyruvate: Arg-346 and Arg-388.

This sequence belongs to the EPSP synthase family. As to quaternary structure, monomer.

It localises to the cytoplasm. The catalysed reaction is 3-phosphoshikimate + phosphoenolpyruvate = 5-O-(1-carboxyvinyl)-3-phosphoshikimate + phosphate. It functions in the pathway metabolic intermediate biosynthesis; chorismate biosynthesis; chorismate from D-erythrose 4-phosphate and phosphoenolpyruvate: step 6/7. In terms of biological role, catalyzes the transfer of the enolpyruvyl moiety of phosphoenolpyruvate (PEP) to the 5-hydroxyl of shikimate-3-phosphate (S3P) to produce enolpyruvyl shikimate-3-phosphate and inorganic phosphate. The sequence is that of 3-phosphoshikimate 1-carboxyvinyltransferase from Streptococcus pyogenes serotype M6 (strain ATCC BAA-946 / MGAS10394).